Here is a 394-residue protein sequence, read N- to C-terminus: S-adenosylmethionine synthase 2 (394 aa).

Residue E11 participates in Mg(2+) binding. H17 contacts ATP. K(+) is bound at residue E45. Residues E58 and Q101 each contribute to the L-methionine site. ATP is bound by residues 169–171 (DGK), 237–240 (SGRF), D248, 254–255 (RK), A271, K275, and K279. D248 is a binding site for L-methionine. K279 serves as a coordination point for L-methionine.

It belongs to the AdoMet synthase family. As to quaternary structure, homotetramer. Mn(2+) serves as cofactor. Mg(2+) is required as a cofactor. The cofactor is Co(2+). Requires K(+) as cofactor.

It localises to the cytoplasm. The enzyme catalyses L-methionine + ATP + H2O = S-adenosyl-L-methionine + phosphate + diphosphate. It participates in amino-acid biosynthesis; S-adenosyl-L-methionine biosynthesis; S-adenosyl-L-methionine from L-methionine: step 1/1. Functionally, catalyzes the formation of S-adenosylmethionine from methionine and ATP. The reaction comprises two steps that are both catalyzed by the same enzyme: formation of S-adenosylmethionine (AdoMet) and triphosphate, and subsequent hydrolysis of the triphosphate. This chain is S-adenosylmethionine synthase 2 (SAM2), found in Oryza sativa subsp. japonica (Rice).